We begin with the raw amino-acid sequence, 603 residues long: Cholinesterase (603 aa).

The first 29 residues, 1–29 (MQTQHTKVTQTHFLLWILLLCMPFGKSHT), serve as a signal peptide directing secretion. An N-linked (GlcNAc...) asparagine glycan is attached at asparagine 86. Residues cysteine 94 and cysteine 121 are joined by a disulfide bond. An N-linked (GlcNAc...) asparagine glycan is attached at asparagine 135. A substrate-binding site is contributed by 145 to 146 (GG). Serine 227 serves as the catalytic Acyl-ester intermediate. Position 227 is a phosphoserine (serine 227). Asparagine 270 is a glycosylation site (N-linked (GlcNAc...) asparagine). Cysteine 281 and cysteine 292 form a disulfide bridge. Glutamate 354 (charge relay system) is an active-site residue. Asparagine 370 carries N-linked (GlcNAc...) asparagine glycosylation. A disulfide bridge links cysteine 429 with cysteine 548. Catalysis depends on histidine 467, which acts as the Charge relay system. N-linked (GlcNAc...) asparagine glycans are attached at residues asparagine 484, asparagine 510, and asparagine 515.

This sequence belongs to the type-B carboxylesterase/lipase family. As to quaternary structure, homotetramer; disulfide-linked. Dimer of dimers. As to expression, present in most cells except erythrocytes.

The protein localises to the secreted. The enzyme catalyses an acylcholine + H2O = a carboxylate + choline + H(+). Its function is as follows. Esterase with broad substrate specificity. Contributes to the inactivation of the neurotransmitter acetylcholine. Can degrade neurotoxic organophosphate esters. This chain is Cholinesterase (Bche), found in Mus musculus (Mouse).